The sequence spans 259 residues: tRNA (guanine-N(7)-)-methyltransferase (259 aa).

Residues 1–73 form a disordered region; sequence MGHHGQMHAQ…GPAEDPDRPG (73 aa). The S-adenosyl-L-methionine site is built by glutamate 91, glutamate 116, asparagine 143, and aspartate 166. Aspartate 166 is a catalytic residue. Residues lysine 170, aspartate 202, and 238-241 contribute to the substrate site; that span reads TKYE.

It belongs to the class I-like SAM-binding methyltransferase superfamily. TrmB family.

It catalyses the reaction guanosine(46) in tRNA + S-adenosyl-L-methionine = N(7)-methylguanosine(46) in tRNA + S-adenosyl-L-homocysteine. It functions in the pathway tRNA modification; N(7)-methylguanine-tRNA biosynthesis. In terms of biological role, catalyzes the formation of N(7)-methylguanine at position 46 (m7G46) in tRNA. In Mycolicibacterium paratuberculosis (strain ATCC BAA-968 / K-10) (Mycobacterium paratuberculosis), this protein is tRNA (guanine-N(7)-)-methyltransferase.